Consider the following 205-residue polypeptide: Large ribosomal subunit protein uL4 (205 aa).

Residues 53–77 (RAAVRGGGRKPWKQKGTGRARAGSI) form a disordered region. Residues 59–70 (GGRKPWKQKGTG) are compositionally biased toward basic residues.

It belongs to the universal ribosomal protein uL4 family. As to quaternary structure, part of the 50S ribosomal subunit.

One of the primary rRNA binding proteins, this protein initially binds near the 5'-end of the 23S rRNA. It is important during the early stages of 50S assembly. It makes multiple contacts with different domains of the 23S rRNA in the assembled 50S subunit and ribosome. Its function is as follows. Forms part of the polypeptide exit tunnel. The chain is Large ribosomal subunit protein uL4 from Acidithiobacillus ferrooxidans (strain ATCC 23270 / DSM 14882 / CIP 104768 / NCIMB 8455) (Ferrobacillus ferrooxidans (strain ATCC 23270)).